Here is a 221-residue protein sequence, read N- to C-terminus: ATP-dependent dethiobiotin synthetase BioD (221 aa).

12–17 lines the ATP pocket; it reads EVGKTV. Thr16 lines the Mg(2+) pocket. Lys39 is a catalytic residue. A substrate-binding site is contributed by Thr43. ATP-binding positions include Asp47, 105 to 108, and 165 to 166; these read EGLG and SC. The Mg(2+) site is built by Asp47 and Glu105.

Belongs to the dethiobiotin synthetase family. In terms of assembly, homodimer. It depends on Mg(2+) as a cofactor.

It is found in the cytoplasm. The catalysed reaction is (7R,8S)-7,8-diammoniononanoate + CO2 + ATP = (4R,5S)-dethiobiotin + ADP + phosphate + 3 H(+). It catalyses the reaction (7R,8S)-8-amino-7-(carboxyamino)nonanoate + ATP = (4R,5S)-dethiobiotin + ADP + phosphate + H(+). It participates in cofactor biosynthesis; biotin biosynthesis; biotin from 7,8-diaminononanoate: step 1/2. Functionally, catalyzes a mechanistically unusual reaction, the ATP-dependent insertion of CO2 between the N7 and N8 nitrogen atoms of 7,8-diaminopelargonic acid (DAPA, also called 7,8-diammoniononanoate) to form a ureido ring. This cyanobacterium does not encode bioA (which catalyzes the formation of the precursor for this reaction in the cannonical pathway), instead it encodes bioU, which replaces bioA and also performs the first half of the cannonical BioD reaction. Thus in this organism BioD has a different substrate. The sequence is that of ATP-dependent dethiobiotin synthetase BioD from Crocosphaera subtropica (strain ATCC 51142 / BH68) (Cyanothece sp. (strain ATCC 51142)).